Consider the following 75-residue polypeptide: MKALIESIVASLVDYPEEIVINKTEEESKVVYHLTVHPDDVGKVIGKNGRIAKAIRTVVYASKTDGNKRIYLDIM.

A KH domain is found at 29–75 (KVVYHLTVHPDDVGKVIGKNGRIAKAIRTVVYASKTDGNKRIYLDIM).

This sequence belongs to the KhpA RNA-binding protein family. Forms a complex with KhpB.

It localises to the cytoplasm. Functionally, a probable RNA chaperone. Forms a complex with KhpB which binds to cellular RNA and controls its expression. Plays a role in peptidoglycan (PG) homeostasis and cell length regulation. This is RNA-binding protein KhpA from Oceanobacillus iheyensis (strain DSM 14371 / CIP 107618 / JCM 11309 / KCTC 3954 / HTE831).